The sequence spans 66 residues: MPKMKTKSGAKKRFRLTGTGKVIAGQAGKRHGMIKRTNKTIRNQRGTNILCESDGRIIRKSFLPNG.

This sequence belongs to the bacterial ribosomal protein bL35 family.

This chain is Large ribosomal subunit protein bL35, found in Azorhizobium caulinodans (strain ATCC 43989 / DSM 5975 / JCM 20966 / LMG 6465 / NBRC 14845 / NCIMB 13405 / ORS 571).